A 26-amino-acid chain; its full sequence is Acetyl-CoA acetyltransferase (26 aa).

C21 (acyl-thioester intermediate) is an active-site residue.

This sequence belongs to the thiolase-like superfamily. Thiolase family. In terms of assembly, homotetramer. Succinylation, adjacent to a coenzyme A binding site. Desuccinylated by SIRT5.

Its subcellular location is the mitochondrion. It catalyses the reaction 2 acetyl-CoA = acetoacetyl-CoA + CoA. This chain is Acetyl-CoA acetyltransferase, found in Sus scrofa (Pig).